The chain runs to 1066 residues: Kinesin-like protein Klp61F (1066 aa).

One can recognise a Kinesin motor domain in the interval N19–I356. G103–T110 contributes to the ATP binding site. A coiled-coil region spans residues V362–K462. Phosphothreonine is present on T520. 4 coiled-coil regions span residues D540–Q569, L639–N738, C808–E875, and D889–R918. Residue T933 is modified to Phosphothreonine. S949 carries the phosphoserine modification. Residues E990–P1002 show a composition bias toward polar residues. Disordered stretches follow at residues E990–V1009 and G1016–A1066. A compositionally biased stretch (low complexity) spans G1033–P1051. S1043 is modified (phosphoserine). Position 1045 is a phosphothreonine (T1045). S1050 and S1054 each carry phosphoserine.

It belongs to the TRAFAC class myosin-kinesin ATPase superfamily. Kinesin family. BimC subfamily. As to quaternary structure, homotetramer. Consists of two pairs of polypeptides associated by coiled-coil interactions to form two homodimers. The homodimers are linked by lateral interactions between their coiled-coil regions to form a bipolar homotetramer consisting of a central rod with two motor domains projecting from either end. Parallel coiled coils extend from each pair of motor heads, switch to two antiparallel coiled coils in the central region and then back to parallel coiled coils. Interacts with Wee1. Post-translationally, phosphorylation is required for localization to mitotic spindles. Phosphorylation of Thr-933 during mitosis controls association with the spindle apparatus. Phosphorylated in vitro by Wee1.

The protein resides in the cytoplasm. It is found in the cytoskeleton. It localises to the spindle. Its subcellular location is the spindle pole. Functionally, important role in mitotic dividing cells. Microtubule motor required for spindle body separation. Slow plus-end directed microtubule motor capable of cross-linking and sliding apart antiparallel microtubules, thereby pushing apart the associated spindle poles during spindle assembly and function. Forms cross-links between microtubules within interpolar microtubule bundles. Contributes to the length of the metaphase spindle, maintains the prometaphase spindle by antagonizing Ncd, drives anaphase B, and also contributes to normal chromosome congression, kinetochore spacing, and anaphase A rates. Displays microtubule-stimulated ATPase activity. Required for normal fusome organization. Required in non-mitotic cells for transport of secretory proteins from the Golgi complex to the cell surface. This is Kinesin-like protein Klp61F from Drosophila melanogaster (Fruit fly).